The sequence spans 380 residues: Cytochrome b (380 aa).

4 consecutive transmembrane segments (helical) span residues 34–54 (FGSL…LLAA), 78–99 (WLIR…YLHI), 114–134 (WNTG…GYVL), and 179–199 (FFTL…IHLT). His84 and His98 together coordinate heme b. Positions 183 and 197 each coordinate heme b. An a ubiquinone-binding site is contributed by His202. Transmembrane regions (helical) follow at residues 227-247 (LKDI…ALFS), 289-309 (LGGV…PLLH), 321-341 (FSQL…WVGS), and 348-368 (FIII…ILFP).

Belongs to the cytochrome b family. As to quaternary structure, the cytochrome bc1 complex contains 11 subunits: 3 respiratory subunits (MT-CYB, CYC1 and UQCRFS1), 2 core proteins (UQCRC1 and UQCRC2) and 6 low-molecular weight proteins (UQCRH/QCR6, UQCRB/QCR7, UQCRQ/QCR8, UQCR10/QCR9, UQCR11/QCR10 and a cleavage product of UQCRFS1). This cytochrome bc1 complex then forms a dimer. Heme b is required as a cofactor.

The protein resides in the mitochondrion inner membrane. Functionally, component of the ubiquinol-cytochrome c reductase complex (complex III or cytochrome b-c1 complex) that is part of the mitochondrial respiratory chain. The b-c1 complex mediates electron transfer from ubiquinol to cytochrome c. Contributes to the generation of a proton gradient across the mitochondrial membrane that is then used for ATP synthesis. This is Cytochrome b (MT-CYB) from Antigone antigone (Sarus crane).